The chain runs to 552 residues: HTH-type transcriptional regulator SgrR (552 aa).

An HTH marR-type domain is found at 1 to 116 (MPSARLQQQF…LVSHLGRSFR (116 aa)). The H-T-H motif DNA-binding region spans 26-49 (LNELAALLSCSRRHMRTLLNTMQD). A solute-binding region spans residues 163–492 (ELEADIAHHW…IDWQADAARW (330 aa)).

Activates the small RNA gene sgrS under glucose-phosphate stress conditions as well as yfdZ. Represses its own transcription under both stress and non-stress conditions. Might act as a sensor of the intracellular accumulation of phosphoglucose by binding these molecules in its C-terminal solute-binding domain. The sequence is that of HTH-type transcriptional regulator SgrR from Shigella dysenteriae serotype 1 (strain Sd197).